Reading from the N-terminus, the 546-residue chain is Arginine--tRNA ligase (546 aa).

Residues 122–132 carry the 'HIGH' region motif; that stretch reads ANPTGPFTVGH.

The protein belongs to the class-I aminoacyl-tRNA synthetase family. Monomer.

Its subcellular location is the cytoplasm. It carries out the reaction tRNA(Arg) + L-arginine + ATP = L-arginyl-tRNA(Arg) + AMP + diphosphate. The polypeptide is Arginine--tRNA ligase (argS) (Thermotoga maritima (strain ATCC 43589 / DSM 3109 / JCM 10099 / NBRC 100826 / MSB8)).